Reading from the N-terminus, the 232-residue chain is Phosphoglycolate phosphatase (232 aa).

The active-site Nucleophile is Asp13. Asp13, Asp15, and Asp175 together coordinate Mg(2+).

Belongs to the HAD-like hydrolase superfamily. CbbY/CbbZ/Gph/YieH family. As to quaternary structure, monomer. Mg(2+) serves as cofactor. The cofactor is chloride.

It catalyses the reaction 2-phosphoglycolate + H2O = glycolate + phosphate. It functions in the pathway organic acid metabolism; glycolate biosynthesis; glycolate from 2-phosphoglycolate: step 1/1. In terms of biological role, specifically catalyzes the dephosphorylation of 2-phosphoglycolate. Is involved in the dissimilation of the intracellular 2-phosphoglycolate formed during the DNA repair of 3'-phosphoglycolate ends, a major class of DNA lesions induced by oxidative stress. The polypeptide is Phosphoglycolate phosphatase (Yersinia pestis).